Reading from the N-terminus, the 230-residue chain is Urease accessory protein UreF (230 aa).

Belongs to the UreF family. UreD, UreF and UreG form a complex that acts as a GTP-hydrolysis-dependent molecular chaperone, activating the urease apoprotein by helping to assemble the nickel containing metallocenter of UreC. The UreE protein probably delivers the nickel.

It is found in the cytoplasm. In terms of biological role, required for maturation of urease via the functional incorporation of the urease nickel metallocenter. This Cupriavidus taiwanensis (strain DSM 17343 / BCRC 17206 / CCUG 44338 / CIP 107171 / LMG 19424 / R1) (Ralstonia taiwanensis (strain LMG 19424)) protein is Urease accessory protein UreF.